A 601-amino-acid chain; its full sequence is MEFKVIAEYFDKLEKISSRLQLTALLADLLSKSDKAIIDKVVYIIQGKLWPDFLGYPELGIGEKFLIKAISIATNTDENSVENLYKSIGDLGEVARRLKSKQQSTGILGFLGTSSKESLKVDEVYSTLSKVALTTGEGSRDLKIRLLAGLLKKADPLEAKFLVRFVEGRLRVGIGDATVLDAMAIAFGGGQSASEIVERAYNLRADLGNIAKIIVEKGIEALKTLKPEVGIPIRPMLAERLSNPEEILKKVGGSALVDYKYDGERAQIHKKDDKIFIFSRRLENITSQYPDVVEYISKYTEGKEFIIEGEIVAVDPESGEMRSFQELMHRKRKSDIYEAIKEYPVNVFLFDLMYYEDVDYTTKPLEVRRKLLESIVKPNDYVKIAHHIQVNNIEDLKSFFYRAISEGGEGVMVKAIGKDAIYQAGARGWLWIKLKRDYQSEMADTVDLVVVGGFYGKGKRGGKISSLLMAAYNPKTDTFESVCKVASGFSDEQLDELQKKLMEIKRDIKHPRVNSKMEPDIWVEPVYVAEIIGAEITISPLHTCCQDVVEKDAGLSIRFPRFIRWRDDKSPEDATTTDEILEMYNKQPKKKIESPPIDESV.

Aspartate 258 contacts ATP. Lysine 260 serves as the catalytic N6-AMP-lysine intermediate. Residues arginine 265, arginine 280, glutamate 310, phenylalanine 350, arginine 427, and lysine 433 each coordinate ATP. A disordered region spans residues 568 to 601 (DKSPEDATTTDEILEMYNKQPKKKIESPPIDESV).

The protein belongs to the ATP-dependent DNA ligase family. Mg(2+) serves as cofactor.

It carries out the reaction ATP + (deoxyribonucleotide)n-3'-hydroxyl + 5'-phospho-(deoxyribonucleotide)m = (deoxyribonucleotide)n+m + AMP + diphosphate.. Functionally, DNA ligase that seals nicks in double-stranded DNA during DNA replication, DNA recombination and DNA repair. The protein is DNA ligase of Saccharolobus islandicus (strain Y.G.57.14 / Yellowstone #1) (Sulfolobus islandicus).